The chain runs to 404 residues: Zinc finger CCCH domain-containing protein 15 homolog (404 aa).

Pro residues predominate over residues 1–10 (MPPKKAPPGP). The interval 1–71 (MPPKKAPPGP…KRKEEKEKKL (71 aa)) is disordered. Over residues 12 to 28 (KKTEQKKKEKVIEDKTF) the composition is skewed to basic and acidic residues. The span at 38 to 50 (QQKFIQQVQKQVQ) shows a compositional bias: low complexity. The segment covering 56–71 (PRQDGDKRKEEKEKKL) has biased composition (basic and acidic residues). 2 C3H1-type zinc fingers span residues 94-121 (DPKS…HDLS) and 165-202 (PTTD…HALP). Phosphothreonine is present on Thr218. Ser221 carries the phosphoserine modification. A coiled-coil region spans residues 246–270 (LAWKKRKIAEKKAKLAAEEERKKSD). Composition is skewed to low complexity over residues 352–361 (EAAKTAAAED) and 369–380 (PSSSAPANDAAP). The disordered stretch occupies residues 352-380 (EAAKTAAAEDAAADEDGPSSSAPANDAAP).

It belongs to the ZC3H15/TMA46 family.

The polypeptide is Zinc finger CCCH domain-containing protein 15 homolog (Drosophila melanogaster (Fruit fly)).